A 210-amino-acid chain; its full sequence is 3-hexulose-6-phosphate synthase (210 aa).

It belongs to the HPS/KGPDC family. HPS subfamily.

The catalysed reaction is D-ribulose 5-phosphate + formaldehyde = D-arabino-hex-3-ulose 6-phosphate. It participates in one-carbon metabolism; formaldehyde assimilation via RuMP pathway; D-fructose 6-phosphate from D-ribulose 5-phosphate and formaldehyde: step 1/2. Its function is as follows. Catalyzes the condensation of ribulose 5-phosphate with formaldehyde to form 3-hexulose 6-phosphate. The chain is 3-hexulose-6-phosphate synthase from Staphylococcus aureus (strain MRSA252).